Here is a 37-residue protein sequence, read N- to C-terminus: Large ribosomal subunit protein bL36 (37 aa).

It belongs to the bacterial ribosomal protein bL36 family.

The polypeptide is Large ribosomal subunit protein bL36 (Thermomicrobium roseum (strain ATCC 27502 / DSM 5159 / P-2)).